Reading from the N-terminus, the 336-residue chain is MLGYILWTSLYVLLIVIPLILVVAYYTYAERKVIGYMQDRIGPNRVGSFGLLQPIFDALKLFLKEIIVPTNSNRYLFFIAPILAFAPAYAAWAVIPFSKGVVLSDMNLGLLYILAMTSFSIYGIVIAGWASNSKYSLFGALRAGAQVISYELAMGFAIVGVVIAAGSMGITGIIEAQSGGIWHWYFISLFPLFIVYFIAGIAETNRAPFDVVEGESEIVAGHHIEYTGSRFALFFLAEYANMILISILTSIMFLGGWNSPFQATALESIFGFVPGVVWLFAKTGIFMFMFLWVRATYPRYRYDQIMRLGWKIFIPLTFVWVVIVACMVRLGVGPWW.

Helical transmembrane passes span 4 to 24 (YILW…LVVA), 75 to 95 (YLFF…WAVI), 108 to 128 (LGLL…VIAG), 154 to 174 (MGFA…TGII), 181 to 201 (IWHW…IAGI), 233 to 253 (LFFL…SIMF), 272 to 292 (FVPG…MFLW), and 308 to 328 (LGWK…ACMV).

This sequence belongs to the complex I subunit 1 family. In terms of assembly, NDH-1 is composed of 14 different subunits. Subunits NuoA, H, J, K, L, M, N constitute the membrane sector of the complex.

It localises to the cell inner membrane. It carries out the reaction a quinone + NADH + 5 H(+)(in) = a quinol + NAD(+) + 4 H(+)(out). Its function is as follows. NDH-1 shuttles electrons from NADH, via FMN and iron-sulfur (Fe-S) centers, to quinones in the respiratory chain. The immediate electron acceptor for the enzyme in this species is believed to be ubiquinone. Couples the redox reaction to proton translocation (for every two electrons transferred, four hydrogen ions are translocated across the cytoplasmic membrane), and thus conserves the redox energy in a proton gradient. This subunit may bind ubiquinone. The protein is NADH-quinone oxidoreductase subunit H of Francisella tularensis subsp. mediasiatica (strain FSC147).